A 1837-amino-acid chain; its full sequence is Zinc finger SWIM domain-containing protein 8 (1837 aa).

Ser36, Ser48, and Ser53 each carry phosphoserine. The tract at residues 45-65 (RKQSAGPNSPTGGGGGGGSGG) is disordered. Gly residues predominate over residues 55–65 (TGGGGGGGSGG). The SWIM-type zinc finger occupies 172–208 (YNVAVMFDRCRVTSCSCTCGAGAKWCTHVVALCLFRI). Ser437 is subject to Phosphoserine. 3 disordered regions span residues 514–727 (SRPG…EEDD), 803–823 (NPPDLKVEPPPAKGKKNKVST), and 1016–1232 (SQTH…VPNQ). Composition is skewed to basic and acidic residues over residues 523–532 (GLEESRDRPR) and 566–575 (LSAEGGDKAL). At Ser567 the chain carries Phosphoserine. The segment covering 579-602 (GPGGGKAKALGGAGSGSKGSAGGG) has biased composition (gly residues). A compositionally biased stretch (polar residues) spans 1019–1040 (HKPQTLSSFYSSSRPTTASQRS). A compositionally biased stretch (gly residues) spans 1119–1130 (SRGGYNGRGWGS). Thr1139 is modified (phosphothreonine). Residues 1144–1159 (IDSSAPETTSDSSPTL) are compositionally biased toward polar residues. Phosphoserine is present on residues Ser1153, Ser1156, and Ser1160. Over residues 1174 to 1209 (GRGQDSDSISSSSSDSLGSSSSSGSRRASASGGARA) the composition is skewed to low complexity. Residues 1210–1226 (KTVEVGRYKGRRPESHA) show a composition bias toward basic and acidic residues. Position 1267 is a phosphoserine (Ser1267). Disordered regions lie at residues 1442–1464 (SASGIRAGGEAGRGMPEGRGGPG) and 1635–1656 (QPSPLVSGGFPPPEEETHSQPV). Residues 1447 to 1464 (RAGGEAGRGMPEGRGGPG) are compositionally biased toward gly residues. Ser1836 carries the post-translational modification Phosphoserine.

Belongs to the ZSWIM8 family. As to quaternary structure, component of the SCF-like E3 ubiquitin-protein ligase complex which contains CUL3, RBX1, ELOB, ELOC and ZSWIM8. In terms of assembly, (Microbial infection) Interacts with Zika virus protein NS5; this interaction allows STAT2 binding and subsequent proteasomal degradation.

It localises to the cytoplasm. The protein localises to the cytosol. It functions in the pathway protein modification; protein ubiquitination. Functionally, substrate recognition component of a SCF-like E3 ubiquitin-protein ligase complex that promotes target-directed microRNA degradation (TDMD), a process that mediates degradation of microRNAs (miRNAs). The SCF-like E3 ubiquitin-protein ligase complex acts by catalyzing ubiquitination and subsequent degradation of AGO proteins (AGO1, AGO2, AGO3 and/or AGO4), thereby exposing miRNAs for degradation. Specifically recognizes and binds AGO proteins when they are engaged with a TDMD target. May also act as a regulator of axon guidance: specifically recognizes misfolded ROBO3 and promotes its ubiquitination and subsequent degradation. Plays an essential role for proper embryonic development of heart and lung. Controls protein quality of DAB1, a key signal molecule for brain development, thus protecting its signaling strength. Mechanistically, recognizes intrinsically disordered regions of DAB1 and eliminates misfolded DAB1 that cannot be properly phosphorylated. (Microbial infection) Participates in Zika virus inhibition of IFN signaling by acting as a scaffold protein to connect ZSWIM8/CUL3 ligase complex and STAT2, leading to STAT2 degradation. In Homo sapiens (Human), this protein is Zinc finger SWIM domain-containing protein 8.